A 345-amino-acid polypeptide reads, in one-letter code: Biotin synthase (345 aa).

The Radical SAM core domain occupies 67-295; that stretch reads YKVQLASLLS…KSRIRLSAGR (229 aa). Residues C82, C86, and C89 each coordinate [4Fe-4S] cluster. Residues C126, C158, C218, and R290 each contribute to the [2Fe-2S] cluster site.

It belongs to the radical SAM superfamily. Biotin synthase family. In terms of assembly, homodimer. The cofactor is [4Fe-4S] cluster. It depends on [2Fe-2S] cluster as a cofactor.

It catalyses the reaction (4R,5S)-dethiobiotin + (sulfur carrier)-SH + 2 reduced [2Fe-2S]-[ferredoxin] + 2 S-adenosyl-L-methionine = (sulfur carrier)-H + biotin + 2 5'-deoxyadenosine + 2 L-methionine + 2 oxidized [2Fe-2S]-[ferredoxin]. It participates in cofactor biosynthesis; biotin biosynthesis; biotin from 7,8-diaminononanoate: step 2/2. In terms of biological role, catalyzes the conversion of dethiobiotin (DTB) to biotin by the insertion of a sulfur atom into dethiobiotin via a radical-based mechanism. This is Biotin synthase from Prochlorococcus marinus (strain NATL1A).